Reading from the N-terminus, the 413-residue chain is 3-oxoacyl-[acyl-carrier-protein] synthase 2 (413 aa).

Positions 3 to 412 constitute a Ketosynthase family 3 (KS3) domain; sequence KRRVVVTGLG…GTNGSLIFKK (410 aa). Residues Cys-164, His-304, and His-341 each act as for beta-ketoacyl synthase activity in the active site.

It belongs to the thiolase-like superfamily. Beta-ketoacyl-ACP synthases family. Homodimer.

It catalyses the reaction a fatty acyl-[ACP] + malonyl-[ACP] + H(+) = a 3-oxoacyl-[ACP] + holo-[ACP] + CO2. The enzyme catalyses (9Z)-hexadecenoyl-[ACP] + malonyl-[ACP] + H(+) = 3-oxo-(11Z)-octadecenoyl-[ACP] + holo-[ACP] + CO2. Its pathway is lipid metabolism; fatty acid biosynthesis. Its function is as follows. Involved in the type II fatty acid elongation cycle. Catalyzes the elongation of a wide range of acyl-ACP by the addition of two carbons from malonyl-ACP to an acyl acceptor. Can efficiently catalyze the conversion of palmitoleoyl-ACP (cis-hexadec-9-enoyl-ACP) to cis-vaccenoyl-ACP (cis-octadec-11-enoyl-ACP), an essential step in the thermal regulation of fatty acid composition. The sequence is that of 3-oxoacyl-[acyl-carrier-protein] synthase 2 (fabF) from Escherichia coli O157:H7.